We begin with the raw amino-acid sequence, 146 residues long: 3-dehydroquinate dehydratase (146 aa).

Tyr23 acts as the Proton acceptor in catalysis. Residues Asn74, His80, and Asp87 each contribute to the substrate site. His100 serves as the catalytic Proton donor. Substrate is bound by residues 101–102 and Arg111; that span reads IS.

This sequence belongs to the type-II 3-dehydroquinase family. Homododecamer.

The enzyme catalyses 3-dehydroquinate = 3-dehydroshikimate + H2O. Its pathway is metabolic intermediate biosynthesis; chorismate biosynthesis; chorismate from D-erythrose 4-phosphate and phosphoenolpyruvate: step 3/7. Functionally, catalyzes a trans-dehydration via an enolate intermediate. The sequence is that of 3-dehydroquinate dehydratase from Bacillus cereus (strain B4264).